A 542-amino-acid polypeptide reads, in one-letter code: MSSSDRDIIDIESGEEDLYSDGGNDIIDIESGEEDLYSDGGNVSDDYNPVDDTISRSEKSYVVVKEEDILKLQRDDIEQVSTVLSVSQVESIVLLLHYHWCVSKLEDEWFTDEERIRKTVGILKEPVVDVNGTEVDIQCGICFESYTRKEIARVSCGHPYCKTCWTGYITTKIEDGPGCLRVKCPEPSCYAVVGQDMIDEVTEKKDKDKYYRYFLRSYVEDGKKMKWCPSPGCEYAVEFGVNGSSSYDVSCLCSYKFCWNCCEDAHSPVDCETVSKWLLKNKDESENMNWILAKTKPCPKCKRPIEKNTGCNHMSCSAPCRHYFCWACLQPLSDHKACNAFKADNEDETKRKRAKDAIDRYTHFYERWAFNQSSRLKAMSDLEKWQSVELKQLSDIQSTPETQLSFTVDAWLQIIECRRVLKWTYAYGYYILSQERNKRVFARTFSLSCCSAEAENGLERLHHCAEEELKQFIGKIEDPSKNFGELRAKLIDLTKATKTYFENLVKALENGLVDVAYNESQSIEEPESFTKRSKTRKIKTLI.

A disordered region spans residues 1-25; that stretch reads MSSSDRDIIDIESGEEDLYSDGGND. Acidic residues predominate over residues 10–19; it reads DIESGEEDLY. The tract at residues 135–342 is TRIAD supradomain; sequence VDIQCGICFE…SDHKACNAFK (208 aa). Zn(2+) contacts are provided by C139, C142, C156, H158, C161, C164, C184, C189, C228, C233, C251, C253, C258, C261, H266, C271, C298, and C301. Residues 139–189 form an RING-type 1 zinc finger; it reads CGICFESYTRKEIARVSCGHPYCKTCWTGYITTKIEDGPGCLRVKCPEPSC. The IBR-type zinc-finger motif lies at 208–271; it reads DKYYRYFLRS…CEDAHSPVDC (64 aa). An RING-type 2; atypical zinc finger spans residues 298-328; sequence CPKCKRPIEKNTGCNHMSCSAPCRHYFCWAC. C311 is a catalytic residue. Zn(2+) contacts are provided by C316, C320, C325, C328, H335, and C338.

It belongs to the RBR family. Ariadne subfamily. Zn(2+) is required as a cofactor.

It catalyses the reaction [E2 ubiquitin-conjugating enzyme]-S-ubiquitinyl-L-cysteine + [acceptor protein]-L-lysine = [E2 ubiquitin-conjugating enzyme]-L-cysteine + [acceptor protein]-N(6)-ubiquitinyl-L-lysine.. The protein operates within protein modification; protein ubiquitination. Might act as an E3 ubiquitin-protein ligase, or as part of E3 complex, which accepts ubiquitin from specific E2 ubiquitin-conjugating enzymes and then transfers it to substrates. This Arabidopsis thaliana (Mouse-ear cress) protein is Probable E3 ubiquitin-protein ligase ARI11 (ARI11).